The primary structure comprises 593 residues: High affinity cGMP-specific 3',5'-cyclic phosphodiesterase 9A (593 aa).

Residues 87–141 (SAGVEDKRTTSRGQSAERPLRDRRVVGLEQPRREGAFESGQVEPRPREPQGCYQE) are disordered. Residues 104–122 (RPLRDRRVVGLEQPRREGA) are compositionally biased toward basic and acidic residues. Residues 236–557 (PRRDVPTYPK…DRYEELKRID (322 aa)) enclose the PDEase domain. Histidine 312 (proton donor) is an active-site residue. 312–316 (HNFRH) serves as a coordination point for 3',5'-cyclic GMP. Histidine 316, histidine 352, and aspartate 353 together coordinate Zn(2+). A 3',5'-cyclic GMP-binding site is contributed by aspartate 353. Aspartate 353 provides a ligand contact to Mg(2+). Residue serine 379 is modified to Phosphoserine. 3',5'-cyclic GMP is bound by residues aspartate 462, tyrosine 484, and 512–513 (AQ). Aspartate 462 is a binding site for Zn(2+). The segment at 564 to 593 (QKKTDSLTSGATEKSRERSRDVKNSEGDCA) is disordered. Residues 576–593 (EKSRERSRDVKNSEGDCA) show a composition bias toward basic and acidic residues.

The protein belongs to the cyclic nucleotide phosphodiesterase family. PDE9 subfamily. As to quaternary structure, homodimer. It depends on Zn(2+) as a cofactor. Mg(2+) is required as a cofactor. In terms of tissue distribution, expressed in all tissues examined (testis, brain, small intestine, skeletal muscle, heart, lung, thymus, spleen, placenta, kidney, liver, pancreas, ovary and prostate) except blood. Highest levels in brain, heart, kidney, spleen, prostate and colon. Isoform PDE9A12 is found in prostate. In brain, present in the cortex, cerebellum, and subiculum (at protein level). In heart, primarily localizes to myocytes.

It is found in the cell projection. The protein localises to the ruffle membrane. The protein resides in the cytoplasm. Its subcellular location is the perinuclear region. It localises to the golgi apparatus. It is found in the endoplasmic reticulum. The protein localises to the cell membrane. The protein resides in the sarcolemma. It catalyses the reaction 3',5'-cyclic GMP + H2O = GMP + H(+). It functions in the pathway purine metabolism; 3',5'-cyclic GMP degradation; GMP from 3',5'-cyclic GMP: step 1/1. Its activity is regulated as follows. Inhibited by zaprinast; inhibitor is however not specific to PDE9A. Specifically inhibited by BAY-73-6691 (1-(2-chlorophenyl)-6-((2R)-3,3,3- trifluoro-2-methylpropyl)-1,5-dihydro-4H-pyrazolo(3,4-d)pyrimidine-4-one). BAY-73-9961 has two enantiomers, (R) and (S), due to the presence of a chiral center, and both forms vary in their pattern of interaction. Specifically inhibited by PF-4181366 (4H-Pyrazolo[3,4-d]pyrimidin-4-one, 1- cyclopentyl-1,5-dihydro-6-[(3S,4S)-4-methyl- 1-(6-quinoxalinylmethyl)-3-pyrrolidinyl]-one). Specifically inhibited by PF-4449613 ((R)-6-(1-(3-phenoxyazetidin-1-yl)ethyl)-1-(tetrahydro-2H-pyran-4-yl)-1H-pyrazolo[3,4-d]pyrimidin- 4(5H)-one). Specifically inhibited by inhibitor 28 (2-((1-(2-Chlorophenyl)-4-hydroxy-1Hpyrazolo[ 3,4-d]pyrimidin-6-yl)amino)-N-(4- methoxyphenyl)propanamide): inhibitor forms a hydrogen bond with Tyr-484 and Gln-513. Specifically inhibited by 1-Cyclopentyl-6-[(1r)-1-(3-phenoxyazetidin- 1-Yl)ethyl]-1,5-dihydro-4h-pyrazolo[3,4-D] pyrimidin-4-one: inhibitor forms a hydrogen bond with Tyr-484 and Gln-513. Functionally, specifically hydrolyzes the second messenger cGMP, which is a key regulator of many important physiological processes. Highly specific: compared to other members of the cyclic nucleotide phosphodiesterase family, has the highest affinity and selectivity for cGMP. Specifically regulates natriuretic-peptide-dependent cGMP signaling in heart, acting as a regulator of cardiac hypertrophy in myocytes and muscle. Does not regulate nitric oxide-dependent cGMP in heart. Additional experiments are required to confirm whether its ability to hydrolyze natriuretic-peptide-dependent cGMP is specific to heart or is a general feature of the protein. In brain, involved in cognitive function, such as learning and long-term memory. The sequence is that of High affinity cGMP-specific 3',5'-cyclic phosphodiesterase 9A from Homo sapiens (Human).